A 428-amino-acid chain; its full sequence is Kynureninase (428 aa).

Pyridoxal 5'-phosphate is bound by residues Thr104, Thr105, 132 to 135, Asp213, His216, and Tyr238; that span reads FPSD. The residue at position 239 (Lys239) is an N6-(pyridoxal phosphate)lysine. Pyridoxal 5'-phosphate is bound by residues Trp267 and Thr295.

This sequence belongs to the kynureninase family. As to quaternary structure, homodimer. The cofactor is pyridoxal 5'-phosphate.

The enzyme catalyses L-kynurenine + H2O = anthranilate + L-alanine + H(+). The catalysed reaction is 3-hydroxy-L-kynurenine + H2O = 3-hydroxyanthranilate + L-alanine + H(+). The protein operates within amino-acid degradation; L-kynurenine degradation; L-alanine and anthranilate from L-kynurenine: step 1/1. It functions in the pathway cofactor biosynthesis; NAD(+) biosynthesis; quinolinate from L-kynurenine: step 2/3. In terms of biological role, catalyzes the cleavage of L-kynurenine (L-Kyn) and L-3-hydroxykynurenine (L-3OHKyn) into anthranilic acid (AA) and 3-hydroxyanthranilic acid (3-OHAA), respectively. The sequence is that of Kynureninase from Bacillus thuringiensis subsp. konkukian (strain 97-27).